Reading from the N-terminus, the 93-residue chain is Small ribosomal subunit protein uS19 (93 aa).

The protein belongs to the universal ribosomal protein uS19 family.

Functionally, protein S19 forms a complex with S13 that binds strongly to the 16S ribosomal RNA. The polypeptide is Small ribosomal subunit protein uS19 (Mycobacterium sp. (strain JLS)).